A 314-amino-acid polypeptide reads, in one-letter code: 4-hydroxy-3-methylbut-2-enyl diphosphate reductase (314 aa).

A [4Fe-4S] cluster-binding site is contributed by Cys12. (2E)-4-hydroxy-3-methylbut-2-enyl diphosphate-binding residues include His41 and His74. Residues His41 and His74 each coordinate dimethylallyl diphosphate. Positions 41 and 74 each coordinate isopentenyl diphosphate. Residue Cys96 participates in [4Fe-4S] cluster binding. Position 124 (His124) interacts with (2E)-4-hydroxy-3-methylbut-2-enyl diphosphate. Position 124 (His124) interacts with dimethylallyl diphosphate. His124 contacts isopentenyl diphosphate. Glu126 functions as the Proton donor in the catalytic mechanism. Thr167 contacts (2E)-4-hydroxy-3-methylbut-2-enyl diphosphate. Residue Cys197 participates in [4Fe-4S] cluster binding. Residues Ser225, Ser226, Asn227, and Ser269 each coordinate (2E)-4-hydroxy-3-methylbut-2-enyl diphosphate. Dimethylallyl diphosphate-binding residues include Ser225, Ser226, Asn227, and Ser269. Positions 225, 226, 227, and 269 each coordinate isopentenyl diphosphate.

Belongs to the IspH family. [4Fe-4S] cluster is required as a cofactor.

It carries out the reaction isopentenyl diphosphate + 2 oxidized [2Fe-2S]-[ferredoxin] + H2O = (2E)-4-hydroxy-3-methylbut-2-enyl diphosphate + 2 reduced [2Fe-2S]-[ferredoxin] + 2 H(+). The catalysed reaction is dimethylallyl diphosphate + 2 oxidized [2Fe-2S]-[ferredoxin] + H2O = (2E)-4-hydroxy-3-methylbut-2-enyl diphosphate + 2 reduced [2Fe-2S]-[ferredoxin] + 2 H(+). The protein operates within isoprenoid biosynthesis; dimethylallyl diphosphate biosynthesis; dimethylallyl diphosphate from (2E)-4-hydroxy-3-methylbutenyl diphosphate: step 1/1. Its pathway is isoprenoid biosynthesis; isopentenyl diphosphate biosynthesis via DXP pathway; isopentenyl diphosphate from 1-deoxy-D-xylulose 5-phosphate: step 6/6. In terms of biological role, catalyzes the conversion of 1-hydroxy-2-methyl-2-(E)-butenyl 4-diphosphate (HMBPP) into a mixture of isopentenyl diphosphate (IPP) and dimethylallyl diphosphate (DMAPP). Acts in the terminal step of the DOXP/MEP pathway for isoprenoid precursor biosynthesis. The polypeptide is 4-hydroxy-3-methylbut-2-enyl diphosphate reductase (Histophilus somni (strain 2336) (Haemophilus somnus)).